The primary structure comprises 1427 residues: Double-stranded DNA deaminase toxin A (1427 aa).

The next 2 membrane-spanning stretches (helical) occupy residues 16–36 (ALAG…AVAF) and 43–63 (FGVA…LLSI). YD repeat units lie at residues 469 to 501 (RVVE…DGRT), 548 to 584 (YDDA…GPDG), 720 to 747 (NARG…GRLR), and 977 to 1008 (YDGA…ISRA). The tract at residues 1264–1427 (IGLNGGANVY…SPKSPTKGGC (164 aa)) is C-terminal effector domain, has cytidine deaminase activity. Zn(2+)-binding residues include H1345, C1373, and C1376. A disordered region spans residues 1402–1427 (KRGATGETKVFTGNSNSPKSPTKGGC). Residues 1412 to 1421 (FTGNSNSPKS) show a composition bias toward polar residues.

This sequence belongs to the RHS/WapA nuclease family. In terms of assembly, the toxic domain forms a 1:1 complex with the DddI immunity protein.

It is found in the membrane. It catalyses the reaction a 2'-deoxycytidine in double-stranded DNA + H2O + H(+) = a 2'-deoxyuridine in double-stranded DNA + NH4(+). Functionally, toxic component of a toxin-immunity protein module, which functions as a cellular contact-dependent growth inhibition (CDI) system. CDI modules allow bacteria to communicate with and inhibit the growth of closely related neighboring bacteria in a contact-dependent fashion. Bacteria that have this module inhibit or kill bacteria without it, giving them a growth advantage. Probably specifically inhibited by cognate immunity protein DddI. The C-terminal 163 residue fragment has double-stranded DNA cytidine deaminase activity; it does not deaminate ssDNA, ssRNA or dsRNA. Leads to C:G to T:A conversions in deaminated DNA. Preferentially deaminates 5'-TC-3' substrates. The chain is Double-stranded DNA deaminase toxin A from Burkholderia cenocepacia (strain H111).